We begin with the raw amino-acid sequence, 401 residues long: Putative hetero-Diels-Alderase asR5 (401 aa).

The N-terminal stretch at M1 to A21 is a signal peptide. Residues N71, N77, N240, and N334 are each glycosylated (N-linked (GlcNAc...) asparagine).

The protein belongs to the eupF Diels-Alderase family.

It functions in the pathway secondary metabolite biosynthesis; terpenoid biosynthesis. Putative hetero-Diels-Alderase; part of the gene cluster that mediates the biosynthesis of xenovulene A, an unusual meroterpenoid that has potent inhibitory effects on the human gamma-aminobutyrate A (GABAA) benzodiazepine receptor. The first step of xenovulene A biosynthesis is the biosynthesis of 3-methylorcinaldehyde performed by the non-reducing polyketide synthase aspks1. The salicylate hydroxylase asL1 then catalyzes the oxidative dearomatization of 3-methylorcinaldehyde to yield a dearomatized hydroxycyclohexadione. The 2-oxoglutarate-dependent dioxygenase asL3 further catalyzes the oxidative ring expansion to provide the first tropolone metabolite. The cytochrome P450 monooxygenase asR2 allows the synthesis of tropolone hemiacetal. In parallel, a previously unrecognised class of terpene cyclase, asR6, produces alpha-humulene from farnesylpyrophosphate (FPP). The putative Diels-Alderase asR5 probably catalyzes the formation of the tropolone-humulene skeleton by linking humulene and the polyketide moiety. Oxidative-ring contractions catalyzed by asL4 and asL6 then processively remove carbon atoms from the polyketide to yield xenovulene A. This Sarocladium schorii (Acremonium strictum (strain IMI 501407)) protein is Putative hetero-Diels-Alderase asR5.